The following is a 402-amino-acid chain: Putative cytochrome P450 133B1 (402 aa).

Cys-348 is a binding site for heme.

It belongs to the cytochrome P450 family. It depends on heme as a cofactor.

The chain is Putative cytochrome P450 133B1 (cyp133B1) from Xylella fastidiosa (strain 9a5c).